The primary structure comprises 367 residues: GDP-perosamine synthase (367 aa).

Lys-181 carries the N6-(pyridoxal phosphate)lysine modification.

The protein belongs to the DegT/DnrJ/EryC1 family. Homotetramer. Pyridoxal 5'-phosphate serves as cofactor.

The catalysed reaction is GDP-alpha-D-perosamine + 2-oxoglutarate = GDP-4-dehydro-alpha-D-rhamnose + L-glutamate. It participates in bacterial outer membrane biogenesis; LPS O-antigen biosynthesis. Functionally, catalyzes the synthesis of GDP-perosamine from GDP-4-keto-6-deoxy-D-mannose and L-glutamate. Also shows weak activity with L-glutamine. The protein is GDP-perosamine synthase of Vibrio cholerae.